The sequence spans 163 residues: Putative 4-hydroxy-4-methyl-2-oxoglutarate aldolase (163 aa).

Substrate is bound by residues 76 to 79 (GDML) and arginine 98. Aspartate 99 contacts a divalent metal cation.

This sequence belongs to the class II aldolase/RraA-like family. In terms of assembly, homotrimer. A divalent metal cation is required as a cofactor.

It catalyses the reaction 4-hydroxy-4-methyl-2-oxoglutarate = 2 pyruvate. The enzyme catalyses oxaloacetate + H(+) = pyruvate + CO2. Functionally, catalyzes the aldol cleavage of 4-hydroxy-4-methyl-2-oxoglutarate (HMG) into 2 molecules of pyruvate. Also contains a secondary oxaloacetate (OAA) decarboxylase activity due to the common pyruvate enolate transition state formed following C-C bond cleavage in the retro-aldol and decarboxylation reactions. The sequence is that of Putative 4-hydroxy-4-methyl-2-oxoglutarate aldolase from Pseudomonas entomophila (strain L48).